The following is a 429-amino-acid chain: Lysine-specific demethylase JMJ30 (429 aa).

The JmjC domain occupies 272–429; sequence SSPMEPTYLA…WSNEAESSSS (158 aa). His-326, Asp-328, and His-405 together coordinate Fe cation.

It belongs to the JARID1 histone demethylase family. In terms of assembly, interacts with EFM. Binds to ATXR2, ARF7 and ARF19. The cofactor is Fe(2+). In terms of tissue distribution, expressed ubiquitously in vasculatures, roots, rosette leaves, stems, inflorescences and siliques. Mainly present in the root meristem and root differentiation area. Observed at high level in callus.

The protein localises to the nucleus. It is found in the cytoplasm. It localises to the endoplasmic reticulum. The enzyme catalyses N(6),N(6),N(6)-trimethyl-L-lysyl(36)-[histone H3] + 2 2-oxoglutarate + 2 O2 = N(6)-methyl-L-lysyl(36)-[histone H3] + 2 formaldehyde + 2 succinate + 2 CO2. The catalysed reaction is N(6),N(6),N(6)-trimethyl-L-lysyl(27)-[histone H3] + 2 2-oxoglutarate + 2 O2 = N(6)-methyl-L-lysyl(27)-[histone H3] + 2 formaldehyde + 2 succinate + 2 CO2. It catalyses the reaction N(6),N(6)-dimethyl-L-lysyl(36)-[histone H3] + 2 2-oxoglutarate + 2 O2 = L-lysyl(36)-[histone H3] + 2 formaldehyde + 2 succinate + 2 CO2. Its function is as follows. Histone demethylase that demethylates 'Lys-36' (H3K36me) of histone H3 with a specific activity for H3K36me3 and H3K36me2. Also active on 'Lys-27' (H3K27me) of histone H3 with a specific activity for H3K27me3 and H3K27me2. No activity on H3K36me1 and H3K27me1. Involved in the control of flowering time by demethylating H3K36me2 at the FT locus and repressing its expression. Acts within the central clock and contributes, in parallel with LUX, to temperature compensation, probably as a component of the evening complex, to maintain circadian period at increasing temperatures; this mechanism involves binding to and regulation of CCA1 and PRR7 promoters. Works in concert with TOC1 to promote the morning-phased clock genes CCA1 and LHY which function as components of the central oscillator. Together with JMJ32, regulates the flowering-repressor FLOWERING LOCUS C (FLC) locus by removing the repressive histone modification H3 lysine 27 trimethylation (H3K27me3), especially at elevated temperatures (e.g. 29 degrees Celsius), thus preventing extreme precocious flowering. JMJ30 and JMJ32 are regulators involved in the integration of abscisic acid (ABA) and brassinosteroids (BR) signaling pathways. Together with JMJ32, controls ABA-mediated growth arrest during the post-germination stage in unfavorable conditions, and responses to ABA during root development, via the removal of repressive histone mark (H3K27me3) from the SnRK2.8 promoter, thus promoting SnRK2.8 expression and subsequent kinase-dependent ABI3 activation. In addition, removes the repressive histone marks (H3K27me3) from the BZR1 locus in response to stress and ABA, thus activating the BR signaling pathway which, in turn, inhibits the ABA signaling pathway. Able to drive tissue identity changes to promote callus formation form somatic cells via a massive genome-wide chromatin remodeling (e.g. H3K9me3 demethylation) leading to the induction of Lateral organ Boundaries-Domain (LBD) genes (e.g. LBD16 and LBD29) that establish root primordia; when in complex with ARF proteins (e.g. ARF7 and ARF19), recruits ATXR2 which promotes the deposition of H3K36me3 at LBD genes promoters, thus ensuring their stable activation during callus formation. This is Lysine-specific demethylase JMJ30 from Arabidopsis thaliana (Mouse-ear cress).